Consider the following 265-residue polypeptide: MADS-box protein JOINTLESS (265 aa).

The MADS-box domain occupies 3 to 57 (REKIQIKKIDNSTARQVTFSKRRRGLFKKAEELSVLCDADVALIIFSSTGKLFDY). The K-box domain occupies 87 to 177 (QLVENSNYSR…RQQVMEISNN (91 aa)). The tract at residues 196-232 (ENGFNNNNNEDGQSSESVTNPCNSIDPPPQDDDSSDT) is disordered. The span at 205 to 218 (EDGQSSESVTNPCN) shows a compositional bias: polar residues.

Widely expressed with highest levels in shoot tips and axillary buds. Also found in fully developed pedicels and flowers.

The protein resides in the nucleus. Putative transcription factor that coordinates gene expression underlying the differentiation of the pedicel abscission zone. May also be involved in the maintenance of the inflorescence meristem state. The protein is MADS-box protein JOINTLESS (J) of Solanum lycopersicum (Tomato).